A 159-amino-acid chain; its full sequence is Protein Smg homolog (159 aa).

Belongs to the Smg family.

In Vibrio campbellii (strain ATCC BAA-1116), this protein is Protein Smg homolog.